The primary structure comprises 281 residues: Pantothenate synthetase (281 aa).

30-37 (MGYLHEGH) is a binding site for ATP. Catalysis depends on histidine 37, which acts as the Proton donor. Glutamine 61 is a (R)-pantoate binding site. Glutamine 61 is a beta-alanine binding site. 147–150 (GEKD) contacts ATP. Residue glutamine 153 coordinates (R)-pantoate. ATP contacts are provided by residues isoleucine 176 and 184 to 187 (KSSR).

Belongs to the pantothenate synthetase family. As to quaternary structure, homodimer.

It is found in the cytoplasm. The catalysed reaction is (R)-pantoate + beta-alanine + ATP = (R)-pantothenate + AMP + diphosphate + H(+). It participates in cofactor biosynthesis; (R)-pantothenate biosynthesis; (R)-pantothenate from (R)-pantoate and beta-alanine: step 1/1. Functionally, catalyzes the condensation of pantoate with beta-alanine in an ATP-dependent reaction via a pantoyl-adenylate intermediate. This is Pantothenate synthetase from Clostridium botulinum (strain Loch Maree / Type A3).